We begin with the raw amino-acid sequence, 306 residues long: Tryptophan 2,3-dioxygenase (306 aa).

Residues 1-33 (MQPPGDDAAPRCPFAGAHAPDAPHVPEAAGDDA) are disordered. Residues 75 to 79 (FIIQH), Tyr-137, and Arg-141 contribute to the substrate site. Residue His-264 participates in heme binding. Thr-278 serves as a coordination point for substrate.

Belongs to the tryptophan 2,3-dioxygenase family. In terms of assembly, homotetramer. Heme serves as cofactor.

It carries out the reaction L-tryptophan + O2 = N-formyl-L-kynurenine. It functions in the pathway amino-acid degradation; L-tryptophan degradation via kynurenine pathway; L-kynurenine from L-tryptophan: step 1/2. Functionally, heme-dependent dioxygenase that catalyzes the oxidative cleavage of the L-tryptophan (L-Trp) pyrrole ring and converts L-tryptophan to N-formyl-L-kynurenine. Catalyzes the oxidative cleavage of the indole moiety. This Burkholderia pseudomallei (strain 668) protein is Tryptophan 2,3-dioxygenase.